The chain runs to 70 residues: Large ribosomal subunit protein eL38 (70 aa).

The protein belongs to the eukaryotic ribosomal protein eL38 family.

This Drosophila melanogaster (Fruit fly) protein is Large ribosomal subunit protein eL38 (RpL38).